Reading from the N-terminus, the 974-residue chain is UvrABC system protein A (974 aa).

34–41 (GLSGSGKS) is a binding site for ATP. 2 consecutive ABC transporter domains span residues 331–610 (WARS…TNSL) and 630–959 (ISKT…QFLK). 663-670 (GVSGGGKS) contacts ATP. The C4-type zinc finger occupies 762–788 (CEACQGDGVIKIEMHFLPDVYVTCDVC).

Belongs to the ABC transporter superfamily. UvrA family. As to quaternary structure, forms a heterotetramer with UvrB during the search for lesions.

It localises to the cytoplasm. Its function is as follows. The UvrABC repair system catalyzes the recognition and processing of DNA lesions. UvrA is an ATPase and a DNA-binding protein. A damage recognition complex composed of 2 UvrA and 2 UvrB subunits scans DNA for abnormalities. When the presence of a lesion has been verified by UvrB, the UvrA molecules dissociate. The protein is UvrABC system protein A of Brucella melitensis biotype 1 (strain ATCC 23456 / CCUG 17765 / NCTC 10094 / 16M).